The chain runs to 268 residues: L-proline trans-4-hydroxylase (268 aa).

Residues His-113, Asp-115, and His-218 each contribute to the Fe cation site.

This sequence belongs to the PhyH family. In terms of assembly, monomer. Fe(2+) serves as cofactor.

The enzyme catalyses L-proline + 2-oxoglutarate + O2 = trans-4-hydroxy-L-proline + succinate + CO2. The protein operates within antibiotic biosynthesis. Competitively inhibited by pyridine-2,4-dicarboxylate. Inhibited by diethyl pyrocarbonate (DEPC), 3,4-dihydroxybenzoate, pyridine-2,5-dicarboxylate, alpha,alpha'-dipyridyl, and some metal ions such as Co(2+) and Zn(2+). Its function is as follows. Involved in the biosynthesis of the peptidolactone antibiotic etamycin (viridogrisein). Catalyzes the hydroxylation of free L-proline at the C-4 position to yield trans-4-hydroxy-L-proline. The protein is L-proline trans-4-hydroxylase of Streptomyces griseoviridis.